Reading from the N-terminus, the 605-residue chain is Protein kinase wis1 (605 aa).

Over residues 1–20 (MSSPNNQPLSCSLRQLSISP) the composition is skewed to polar residues. Positions 1–141 (MSSPNNQPLS…TPPGPFPGGL (141 aa)) are disordered. 2 stretches are compositionally biased toward low complexity: residues 31 to 73 (GSLL…SSPS) and 90 to 105 (RLGRSTSSRSRNSLNL). Basic and acidic residues predominate over residues 106–115 (DMKDPSEKPR). Residue Ser-168 is modified to Phosphoserine. Positions 188–200 (SQLAGRLSNSPVK) are enriched in polar residues. Positions 188–263 (SQLAGRLSNS…PSSMASRRGL (76 aa)) are disordered. A compositionally biased stretch (low complexity) spans 244 to 256 (SNSNPTSPVSPSS). Phosphoserine is present on Ser-253. The Protein kinase domain occupies 320–579 (IIKLEELGKG…YHELANHPWL (260 aa)). ATP is bound by residues 326–334 (LGKGNYGVV) and Lys-349. The active-site Proton acceptor is Asp-441. At Ser-469 the chain carries Phosphoserine. Residue Thr-473 is modified to Phosphothreonine.

This sequence belongs to the protein kinase superfamily. STE Ser/Thr protein kinase family. MAP kinase kinase subfamily. In terms of processing, dephosphorylated by pyp1 and pyp2.

It catalyses the reaction L-seryl-[protein] + ATP = O-phospho-L-seryl-[protein] + ADP + H(+). It carries out the reaction L-threonyl-[protein] + ATP = O-phospho-L-threonyl-[protein] + ADP + H(+). The catalysed reaction is L-tyrosyl-[protein] + ATP = O-phospho-L-tyrosyl-[protein] + ADP + H(+). Dosage-dependent regulator of mitosis with serine/ threonine protein kinase activity. May play a role in the integration of nutritional sensing with the control over entry into mitosis. It may interact with cdc25, wee1 and win1. May activate sty1. This chain is Protein kinase wis1 (wis1), found in Schizosaccharomyces pombe (strain 972 / ATCC 24843) (Fission yeast).